A 97-amino-acid chain; its full sequence is UPF0235 protein LHK_03181 (97 aa).

The protein belongs to the UPF0235 family.

The protein is UPF0235 protein LHK_03181 of Laribacter hongkongensis (strain HLHK9).